The sequence spans 510 residues: Inositol-3-phosphate synthase (510 aa).

Residues glycine 70, glycine 71, asparagine 72, asparagine 73, aspartate 143, isoleucine 180, glutamine 190, arginine 193, threonine 230, alanine 231, asparagine 232, threonine 233, glycine 281, serine 282, aspartate 306, serine 309, asparagine 340, asparagine 341, aspartate 342, lysine 355, glycine 393, aspartate 394, aspartate 422, and serine 423 each coordinate NAD(+).

It belongs to the myo-inositol 1-phosphate synthase family. NAD(+) serves as cofactor.

The protein resides in the cytoplasm. It localises to the cytosol. It is found in the nucleus. It carries out the reaction D-glucose 6-phosphate = 1D-myo-inositol 3-phosphate. Its pathway is polyol metabolism; myo-inositol biosynthesis; myo-inositol from D-glucose 6-phosphate: step 1/2. Its function is as follows. Key enzyme in myo-inositol biosynthesis pathway that catalyzes the conversion of glucose 6-phosphate to 1-myo-inositol 1-phosphate in a NAD-dependent manner. This is Inositol-3-phosphate synthase (TUR1) from Spirodela polyrhiza (Giant duckweed).